The primary structure comprises 682 residues: MSRKQLALFEPTLVVQALKEAVKKLNPQAQWRNPVMFIVWIGSLLTTCISIAMASGAMPGNALFSAAISGWLWVTVLFANFAEALAEGRSKAQANSLKGVKKTAFARKLREPKYGAAADKVPADQLRKGDIVLVEAGDIIPCDGEVIEGGASVDESAITGESAPVIRESGGDFASVTGGTRILSDWLVIECSVNPGETFLDRMIAMVEGAQRRKTPNEIALTILLIALTIVFLLATATLWPFSAWGGNAVSVTVLVALLVCLIPTTIGGLLSAIGVAGMSRMLGTNVIATSGRAVEAAGDVDVLLLDKTGTITLGNRQASEFIPAQGVEEKTLADAAQLASLADETPEGRSIVILAKQRFNLRERDVQSLHATFVPFTAQSRMSGINIDNRMIRKGSVDAIRRHIEANGGHFPADVDQKVDQVARQGATPLVVVEGSRVLGVIALKDIVKGGIKERFAQLRQMGIKTVMITGDNRLTAAAIAAEAGVDDFLAEATPEAKLALIRQYQAEGRLVAMTGDGTNDAPALAQADVAVAMNSGTQAAKEAGNMVDLDSNPTKLIEVVHIGKQMLMTRGSLTTFSIANDVAKYFAIIPAAFAATYPQLNALNIMRLHSPDSAILSAVIFNALIIVFLIPLALKGVSYKPLTASAMLRRNLWIYGLGGLLVPFIGIKVIDLLLTVCGLV.

4 helical membrane passes run 34–54 (PVMF…IAMA), 62–82 (ALFS…ANFA), 219–239 (IALT…TATL), and 254–274 (VLVA…LSAI). The active-site 4-aspartylphosphate intermediate is the D307. Residues D344, E348, 377 to 384 (FTAQSRMS), and K395 contribute to the ATP site. Residues D518 and D522 each contribute to the Mg(2+) site. 3 helical membrane passes run 588–608 (FAII…LNIM), 616–636 (AILS…PLAL), and 656–676 (IYGL…DLLL).

The protein belongs to the cation transport ATPase (P-type) (TC 3.A.3) family. Type IA subfamily. As to quaternary structure, the system is composed of three essential subunits: KdpA, KdpB and KdpC.

The protein localises to the cell inner membrane. The catalysed reaction is K(+)(out) + ATP + H2O = K(+)(in) + ADP + phosphate + H(+). Functionally, part of the high-affinity ATP-driven potassium transport (or Kdp) system, which catalyzes the hydrolysis of ATP coupled with the electrogenic transport of potassium into the cytoplasm. This subunit is responsible for energy coupling to the transport system and for the release of the potassium ions to the cytoplasm. This Escherichia fergusonii (strain ATCC 35469 / DSM 13698 / CCUG 18766 / IAM 14443 / JCM 21226 / LMG 7866 / NBRC 102419 / NCTC 12128 / CDC 0568-73) protein is Potassium-transporting ATPase ATP-binding subunit.